We begin with the raw amino-acid sequence, 88 residues long: U2-ctenitoxin-Pn1a (88 aa).

A signal peptide spans 1–17; sequence MKVAILILSILVLAVAS. Residues 18–34 constitute a propeptide that is removed on maturation; sequence ETIEEYRDDFAVEELER. 5 disulfide bridges follow: Cys37–Cys51, Cys44–Cys57, Cys48–Cys86, Cys50–Cys71, and Cys59–Cys69. Lys88 is a propeptide.

As to expression, expressed by the venom gland.

It localises to the secreted. Functionally, inhibits voltage-gated sodium channels (Nav). Causes scratching, lacrimation, hypersalivation, sweating and agitation followed by spastic paralysis of the anterior and posterior extremities and death at dose levels of 1.62 mg/mouse. Insecticidal to the larval and adult forms of the house fly. The polypeptide is U2-ctenitoxin-Pn1a (Phoneutria nigriventer (Brazilian armed spider)).